The chain runs to 962 residues: Phosphatidylinositol 3,4,5-trisphosphate 3-phosphatase and dual-specificity protein phosphatase daf-18 (962 aa).

Positions 1-37 (MVTPPPDVPSTSTRSMARDLQENPNRQPGEPRVSEPY) are disordered. Residues 58–230 (CRTEYQNIDL…YYYHKLRERE (173 aa)) enclose the Phosphatase tensin-type domain. Cys-169 functions as the Phosphocysteine intermediate in the catalytic mechanism. In terms of domain architecture, C2 tensin-type spans 234-530 (LPLRMQLIGV…GMKLHVVLRC (297 aa)). Disordered regions lie at residues 382-416 (DTSIGRKNGMRRNETPMRKIDPETGNEFESPWQIV) and 689-731 (IENT…RLPD). Over residues 392 to 403 (RRNETPMRKIDP) the composition is skewed to basic and acidic residues. A compositionally biased stretch (low complexity) spans 692-704 (TGPSTSGSSAPGT). Residues 706–720 (KKTEASQSDKVKPAT) are compositionally biased toward basic and acidic residues.

The protein belongs to the PTEN phosphatase protein family. Interacts (via C-terminus) with vab-1 (via kinase domain); the interaction is independent of vab-1 kinase activity. Interacts with arr-1 and mpz-1; the interaction may inhibit daf-18. Interacts (via C-terminus) with daf-2 (via kinase domain). In terms of processing, phosphorylated by vab-1 on tyrosine residues which may promote daf-18 degradation. Expressed in embryo, larvae and in adult germline (at protein level). Expressed at equal levels in the 6 vulva precursor cells (VPCs) of L2 larvae and in the descendant cells of the induced VPCs (at protein level). Expressed in the uterus (at protein level). Expressed in the Z2/Z3 germline precursors, oocytes, several amphid neurons and weakly in the nerve cord (at protein level).

Its subcellular location is the perikaryon. It is found in the cell membrane. It localises to the cell projection. The protein resides in the axon. The protein localises to the dendrite. Its subcellular location is the cytoplasm. It is found in the nucleus. It catalyses the reaction a 1,2-diacyl-sn-glycero-3-phospho-(1D-myo-inositol-3,4,5-trisphosphate) + H2O = a 1,2-diacyl-sn-glycero-3-phospho-(1D-myo-inositol-4,5-bisphosphate) + phosphate. The enzyme catalyses O-phospho-L-seryl-[protein] + H2O = L-seryl-[protein] + phosphate. The catalysed reaction is O-phospho-L-threonyl-[protein] + H2O = L-threonyl-[protein] + phosphate. It carries out the reaction O-phospho-L-tyrosyl-[protein] + H2O = L-tyrosyl-[protein] + phosphate. It catalyses the reaction 1,2-dioctanoyl-sn-glycero-3-phospho-(1D-myo-inositol-3,4,5-trisphosphate) + H2O = 1,2-dioctanoyl-sn-glycero-3-phospho-(1D-myo-inositol-4,5-bisphosphate) + phosphate. The enzyme catalyses 1,2-dihexadecanoyl-sn-glycero-3-phospho-(1D-myo-inositol-3,4,5-trisphosphate) + H2O = 1,2-dihexadecanoyl-sn-glycero-3-phospho-(1D-myo-inositol-4,5-bisphosphate) + phosphate. Acts as a dual-specificity protein phosphatase, dephosphorylating tyrosine-, serine- and threonine-phosphorylated proteins. Also acts as a lipid phosphatase, removing the phosphate in the D3 position of the inositol ring from phosphatidylinositol 3,4,5-trisphosphate. By dephosphorylating PtdIns(3,4,5)P3 antagonizes PtdIns(3,4,5)P3 production by age-1/PI3K and thus, negatively regulates daf-2-mediated processes including dauer formation, longevity, fat metabolism, chemotaxis towards salt, thermotolerance and axon guidance. Similarly, promotes apoptosis during embryonic development by suppressing the recruitment of the prosurvival kinases akt-1/2 to the plasma membrane. In addition, regulates Z2/Z3 germline precursor cell cycle by maintaining them arrested at the G2 stage and by controlling their growth during L1 diapause. After sperm depletion in larvae and adult hermaphrodites, promotes germline stem cell quiescence and oocyte accumulation. By dephosphorylating ephrin-like receptor vab-1 on tyrosine residues, negatively regulates oocyte maturation downstream of vab-1 and upstream of mpk-1, independently of daf-2. Plays a role in postembryonic muscle arm extensions. Required for neurite outgrowth during AIY interneuron embryonic development. Mainly independently of daf-2, negatively regulates vulva induction probably by inhibiting mpk-1 phosphorylation. Both lipid and protein phosphatase activities are required for the regulation of vulva induction. Plays a role in gonad and germline development following the L1 diapause. This chain is Phosphatidylinositol 3,4,5-trisphosphate 3-phosphatase and dual-specificity protein phosphatase daf-18, found in Caenorhabditis elegans.